The primary structure comprises 292 residues: Sulfofructosephosphate aldolase (292 aa).

K193 serves as the catalytic Schiff-base intermediate with substrate.

The protein belongs to the aldolase LacD family. In terms of assembly, homotetramer.

It catalyses the reaction 6-deoxy-6-sulfo-D-fructose 1-phosphate = (2S)-3-sulfolactaldehyde + dihydroxyacetone phosphate. In terms of biological role, cleaves 6-deoxy-6-sulfo-D-fructose 1-phosphate (SFP) to form dihydroxyacetone phosphate (DHAP) and 3-sulfolactaldehyde (SLA). Can also catalyze the reverse reaction. This Salmonella typhimurium (strain LT2 / SGSC1412 / ATCC 700720) protein is Sulfofructosephosphate aldolase (yihT).